The primary structure comprises 663 residues: Rho GTPase-activating protein 18 (663 aa).

A disordered region spans residues 15–37 (YHPSGKDQTVGNSHAKAGEEATS). Residues Ser66 and Ser69 each carry the phosphoserine modification. Thr158 is subject to Phosphothreonine. 2 disordered regions span residues 179-227 (RESK…PAPE) and 243-277 (QKES…TRIG). Basic and acidic residues-rich tracts occupy residues 197 to 219 (NENK…KLIP) and 245 to 258 (ESSK…KGDD). Ser263 carries the post-translational modification Phosphoserine. Positions 324–523 (VPLTALLEQD…LLIKYQKLLW (200 aa)) constitute a Rho-GAP domain. Residue Ser610 is modified to Phosphoserine.

Interacts with MPHOSPH6.

It localises to the cytoplasm. In terms of biological role, rho GTPase activating protein that suppresses F-actin polymerization by inhibiting Rho. Rho GTPase activating proteins act by converting Rho-type GTPases to an inactive GDP-bound state. Plays a key role in tissue tension and 3D tissue shape by regulating cortical actomyosin network formation. Acts downstream of YAP1 and inhibits actin polymerization, which in turn reduces nuclear localization of YAP1. Regulates cell shape, spreading, and migration. The chain is Rho GTPase-activating protein 18 from Homo sapiens (Human).